The sequence spans 588 residues: MFS siderochrome iron transporter 1 (588 aa).

The next 13 membrane-spanning stretches (helical) occupy residues 60 to 80, 104 to 124, 133 to 153, 161 to 181, 191 to 211, 225 to 245, 278 to 298, 307 to 327, 348 to 368, 385 to 405, 413 to 433, 440 to 460, and 473 to 495; these read QVWS…ITFV, LTAS…LPLA, PQGF…MAAC, AAQV…SIFI, ALMF…GGPL, YGAF…VFAW, IIGI…FSLY, SSLV…FALY, LGAC…DSYF, YIVN…GILV, WLAL…MITF, IGYI…CVIT, and YVAV…GQTV. N-linked (GlcNAc...) asparagine glycosylation is present at N519. A helical membrane pass occupies residues 552–572; that stretch reads KYMLIGGTAILAVGLGATMMW.

The protein belongs to the major facilitator superfamily.

The protein localises to the membrane. Major facilitator transporter involved in siderophore transport. This Ajellomyces capsulatus (Darling's disease fungus) protein is MFS siderochrome iron transporter 1.